Consider the following 329-residue polypeptide: Beta-ketoacyl-[acyl-carrier-protein] synthase III (329 aa).

Active-site residues include Cys-123 and His-256. The ACP-binding stretch occupies residues 257–261 (QANIR). Asn-286 is an active-site residue.

It belongs to the thiolase-like superfamily. FabH family. As to quaternary structure, homodimer.

It localises to the cytoplasm. It carries out the reaction malonyl-[ACP] + acetyl-CoA + H(+) = 3-oxobutanoyl-[ACP] + CO2 + CoA. Its pathway is lipid metabolism; fatty acid biosynthesis. Catalyzes the condensation reaction of fatty acid synthesis by the addition to an acyl acceptor of two carbons from malonyl-ACP. Catalyzes the first condensation reaction which initiates fatty acid synthesis and may therefore play a role in governing the total rate of fatty acid production. Possesses both acetoacetyl-ACP synthase and acetyl transacylase activities. Its substrate specificity determines the biosynthesis of branched-chain and/or straight-chain of fatty acids. The chain is Beta-ketoacyl-[acyl-carrier-protein] synthase III from Burkholderia orbicola (strain AU 1054).